The chain runs to 302 residues: tRNA dimethylallyltransferase 2 (302 aa).

Position 6–13 (G6–T13) interacts with ATP. T8–T13 is a substrate binding site. Interaction with substrate tRNA regions lie at residues D31–Q34 and Q154–R158.

Belongs to the IPP transferase family. In terms of assembly, monomer. It depends on Mg(2+) as a cofactor.

It carries out the reaction adenosine(37) in tRNA + dimethylallyl diphosphate = N(6)-dimethylallyladenosine(37) in tRNA + diphosphate. Functionally, catalyzes the transfer of a dimethylallyl group onto the adenine at position 37 in tRNAs that read codons beginning with uridine, leading to the formation of N6-(dimethylallyl)adenosine (i(6)A). This Porphyromonas gingivalis (strain ATCC BAA-308 / W83) protein is tRNA dimethylallyltransferase 2.